The sequence spans 219 residues: Large ribosomal subunit protein uL4c (219 aa).

The segment at 53 to 81 (REHTASTKTKSQVRGGGKKPWKQKGTGRA) is disordered. Basic residues predominate over residues 68–79 (GGKKPWKQKGTG).

The protein belongs to the universal ribosomal protein uL4 family. Part of the 50S ribosomal subunit.

It is found in the plastid. The protein localises to the chloroplast. Functionally, probably binds the 23S rRNA. In Cyanidium caldarium (Red alga), this protein is Large ribosomal subunit protein uL4c (rpl4).